Reading from the N-terminus, the 280-residue chain is MSEAFDCAKCSESLYGRKYIQTDDGPYCVPCYDNTFANTCAECQQLIGHDSRELFYEDRHFHEGCFRCCRCQRSLADEPFTCQDSELLCNDCYCSAFSSQCSACGETVMPGSRKLEYGGQTWHEHCFLCSGCEQPLGSRSFVPDKGAHYCVPCYENKFAPRCARCSKTLTQGGVTYRDQPWHRECLVCTGCQTPLAGQQFTSREDDPYCVTCFGELFAPKCSSCKRPITGLGGGKYVSFEDRHWHHSCFSCARCSTSLVGQGFVPDGDQVLCQGCSQAGP.

Ser2 carries the N-acetylserine modification. The C4-type zinc finger occupies 7–31 (CAKCSESLYGRKYIQTDDGPYCVPC). 2 LIM zinc-binding domains span residues 40-92 (CAEC…CNDC) and 101-153 (CSAC…CVPC). At Lys157 the chain carries N6-acetyllysine. LIM zinc-binding domains lie at 162–212 (CARC…CVTC) and 221–275 (CSSC…CQGC). At Lys235 the chain carries N6-acetyllysine.

As to quaternary structure, interacts with SOX15; the interaction recruits FHL3 to FOXK1 promoters where it acts as a transcriptional coactivator of FOXK1.

It localises to the nucleus. The protein resides in the cytoplasm. Recruited by SOX15 to FOXK1 promoters where it acts as a transcriptional coactivator of FOXK1. This chain is Four and a half LIM domains protein 3 (FHL3), found in Bos taurus (Bovine).